The primary structure comprises 249 residues: 3alpha-hydroxy bile acid-CoA-ester 3-dehydrogenase 2 (249 aa).

NAD(+)-binding positions include 15–18, Glu-38, Glu-42, and Asn-92; that span reads TRGI. Residue Ser-144 participates in substrate binding. Residues Tyr-157 and Lys-161 each act as proton donor/acceptor in the active site. Residues Lys-161 and 190-192 each bind NAD(+); that span reads VNT.

It belongs to the short-chain dehydrogenases/reductases (SDR) family. Homotetramer.

The catalysed reaction is a 3alpha-hydroxy bile acid CoA + NAD(+) = a 3-oxo bile acid CoA + NADH + H(+). The enzyme catalyses choloyl-CoA + NAD(+) = 7alpha,12alpha-dihydroxy-3-oxochol-24-oyl-CoA + NADH + H(+). It catalyses the reaction chenodeoxycholoyl-CoA + NAD(+) = 7alpha-hydroxy-3-oxochol-24-oyl-CoA + NADH + H(+). It carries out the reaction deoxycholoyl-CoA + NAD(+) = 12alpha-hydroxy-3-oxocholan-24-oyl-CoA + NADH + H(+). The catalysed reaction is lithocholoyl-CoA + NAD(+) = 3-oxocholan-24-oyl-CoA + NADH + H(+). It functions in the pathway lipid metabolism; bile acid biosynthesis. Involved in the multi-step bile acid 7alpha-dehydroxylation pathway that transforms primary bile acids to secondary bile acids in the human gut. Catalyzes the oxidation of C3-hydroxyl group of CoA conjugated bile acids generating a C3-oxo bile acid intermediate. Can use choloyl-CoA, chenodeoxycholoyl-CoA, deoxycholoyl-CoA, and lithocholoyl-CoA as substrates with similar efficiency. Highly prefers NAD over NADP as cosubstrate. Also catalyzes the reverse reactions; in vitro, the preferred direction of reaction depends on the pH. Has very little activity with unconjugated (non-CoA) bile acid substrates. This chain is 3alpha-hydroxy bile acid-CoA-ester 3-dehydrogenase 2 (baiA2), found in Clostridium scindens (strain JCM 10418 / VPI 12708).